Consider the following 231-residue polypeptide: Ribonuclease 3 (231 aa).

Residues 6-135 form the RNase III domain; that stretch reads AAMLKERFGI…FVGALYLDQG (130 aa). Glutamate 48 lines the Mg(2+) pocket. Residue aspartate 52 is part of the active site. Positions 121 and 124 each coordinate Mg(2+). Residue glutamate 124 is part of the active site. The 70-residue stretch at 161–230 folds into the DRBM domain; sequence DYKTTLQEYL…ARQAYSQLQQ (70 aa). The segment at 209-231 is disordered; it reads WGHSKKEAEQSAARQAYSQLQQK. A compositionally biased stretch (polar residues) spans 220–231; the sequence is AARQAYSQLQQK.

Belongs to the ribonuclease III family. Homodimer. It depends on Mg(2+) as a cofactor.

It is found in the cytoplasm. It carries out the reaction Endonucleolytic cleavage to 5'-phosphomonoester.. Digests double-stranded RNA. Involved in the processing of primary rRNA transcript to yield the immediate precursors to the large and small rRNAs (23S and 16S). Processes some mRNAs, and tRNAs when they are encoded in the rRNA operon. Processes pre-crRNA and tracrRNA of type II CRISPR loci if present in the organism. This is Ribonuclease 3 from Lactiplantibacillus plantarum (strain ATCC BAA-793 / NCIMB 8826 / WCFS1) (Lactobacillus plantarum).